We begin with the raw amino-acid sequence, 214 residues long: dITP/XTP pyrophosphatase (214 aa).

Position 13 to 18 (13 to 18) interacts with substrate; sequence SHNAGK. Mg(2+)-binding residues include aspartate 45 and aspartate 74. The active-site Proton acceptor is the aspartate 74. Substrate contacts are provided by residues serine 75, 163-166, lysine 186, and 199-200; these read FGYD and HR.

It belongs to the HAM1 NTPase family. As to quaternary structure, homodimer. Mg(2+) serves as cofactor.

The enzyme catalyses XTP + H2O = XMP + diphosphate + H(+). It catalyses the reaction dITP + H2O = dIMP + diphosphate + H(+). It carries out the reaction ITP + H2O = IMP + diphosphate + H(+). Pyrophosphatase that catalyzes the hydrolysis of nucleoside triphosphates to their monophosphate derivatives, with a high preference for the non-canonical purine nucleotides XTP (xanthosine triphosphate), dITP (deoxyinosine triphosphate) and ITP. Seems to function as a house-cleaning enzyme that removes non-canonical purine nucleotides from the nucleotide pool, thus preventing their incorporation into DNA/RNA and avoiding chromosomal lesions. This is dITP/XTP pyrophosphatase from Rhizobium meliloti (strain 1021) (Ensifer meliloti).